Reading from the N-terminus, the 341-residue chain is Glucokinase (341 aa).

Gly-7 to Thr-12 serves as a coordination point for ATP.

The protein belongs to the bacterial glucokinase family.

The protein localises to the cytoplasm. It carries out the reaction D-glucose + ATP = D-glucose 6-phosphate + ADP + H(+). In Nostoc punctiforme (strain ATCC 29133 / PCC 73102), this protein is Glucokinase.